A 498-amino-acid polypeptide reads, in one-letter code: ATP synthase subunit beta, chloroplastic (498 aa).

172-179 (GGAGVGKT) serves as a coordination point for ATP.

This sequence belongs to the ATPase alpha/beta chains family. F-type ATPases have 2 components, CF(1) - the catalytic core - and CF(0) - the membrane proton channel. CF(1) has five subunits: alpha(3), beta(3), gamma(1), delta(1), epsilon(1). CF(0) has four main subunits: a(1), b(1), b'(1) and c(9-12).

Its subcellular location is the plastid. The protein resides in the chloroplast thylakoid membrane. It catalyses the reaction ATP + H2O + 4 H(+)(in) = ADP + phosphate + 5 H(+)(out). Its function is as follows. Produces ATP from ADP in the presence of a proton gradient across the membrane. The catalytic sites are hosted primarily by the beta subunits. The polypeptide is ATP synthase subunit beta, chloroplastic (Oenothera biennis (German evening primrose)).